The sequence spans 337 residues: Cytoskeleton protein RodZ (337 aa).

Residues 1–111 (MNTEATHDQN…LGKRRKKRDG (111 aa)) lie on the Cytoplasmic side of the membrane. In terms of domain architecture, HTH cro/C1-type spans 19-71 (LRNAREQLGLSQQAVAERLCLKVSTVRDIEEDKAPADLASTFLRGYIRSYARL). Residues 30-49 (QQAVAERLCLKVSTVRDIEE) constitute a DNA-binding region (H-T-H motif). A helical; Signal-anchor for type II membrane protein membrane pass occupies residues 112–132 (WLMTFTWLVLFVVIGLSGAWW). At 133 to 337 (WQDHKAQQEE…TLNAEQSPAQ (205 aa)) the chain is on the periplasmic side. Over residues 145–167 (TMADQSSAELSSNSEQGQSVPLN) the composition is skewed to polar residues. Residues 145 to 218 (TMADQSSAEL…AVVSPSQANV (74 aa)) are disordered. A compositionally biased stretch (low complexity) spans 168-207 (TSTTTDPATTSTPPASVDTTATNTQTPAVTAPAPAVDPQQ). A compositionally biased stretch (polar residues) spans 208–218 (NAVVSPSQANV).

Belongs to the RodZ family.

It is found in the cell inner membrane. Its function is as follows. Cytoskeletal protein that is involved in cell-shape control through regulation of the length of the long axis. The sequence is that of Cytoskeleton protein RodZ from Shigella dysenteriae serotype 1 (strain Sd197).